The sequence spans 441 residues: COBRA-like protein 2 (441 aa).

The first 28 residues, 1-28 (MNILFSRFSFLLLFLCSWTSFTFTTTEA), serve as a signal peptide directing secretion. Residues asparagine 37, asparagine 162, asparagine 170, asparagine 209, asparagine 234, asparagine 249, asparagine 314, asparagine 329, and asparagine 348 are each glycosylated (N-linked (GlcNAc...) asparagine). A lipid anchor (GPI-anchor amidated asparagine) is attached at asparagine 417. Positions 418–441 (ASPNIATSPFVILLITFLSVLILM) are cleaved as a propeptide — removed in mature form.

Belongs to the COBRA family. In terms of tissue distribution, expressed in roots, stems, leaves, flowers and siliques.

The protein localises to the cell membrane. This Arabidopsis thaliana (Mouse-ear cress) protein is COBRA-like protein 2 (COBL2).